We begin with the raw amino-acid sequence, 1193 residues long: Falcilysin (1193 aa).

Residue His-129 participates in Zn(2+) binding. Glu-132 (proton acceptor) is an active-site residue. Zn(2+) contacts are provided by His-133 and Glu-243. Positions 376–404 (DKTNNHNNNHSNNQSSENNGYSNGSHSSD) are disordered. Positions 380 to 394 (NHNNNHSNNQSSENN) are enriched in low complexity. The segment covering 395–404 (GYSNGSHSSD) has biased composition (polar residues). Residues 583-619 (LLEGDENYAQEQENLEKQELKKRIENFNEQEKEQVIK) are a coiled coil.

The protein belongs to the peptidase M16 family. As to quaternary structure, monomer. Component of the hemozoin formation complex (HFC) composed of falcipains FP2A and/or FP2B, plasmepsins PMII, PMIII/HAP and PMIV, heme detoxifying protein HDP and falcilysin FLN. The HFC complex is involved in hemoglobin degradation and detoxification of heme in the food vacuole during the asexual blood stage. Zn(2+) serves as cofactor. Post-translationally, does not require processing for targeting to the food vacuole or maturation.

It is found in the vacuole membrane. Its subcellular location is the plastid. The protein resides in the apicoplast. It localises to the vesicle. Its function is as follows. In the food vacuole, acts downstream of proteases plasmepsins PMI and PMII and falcipains during the catabolism of host hemoglobin by cleaving peptide fragments of alpha and beta hemoglobin subunits generated by PMI and PMII and falcipains. In the apicoplast, degrades apicoplast transit peptides after their cleavage. Prefers bulky hydrophobic amino acids in the P1' position at both acidic and neutral pH. At P2', prefers hydrophobic residues at acidic pH; at neutral pH, these same residues are abundant but prefers Arg. At P3', prefers hydrophobic residues, especially Met, at both pH conditions. At P4' and P5', prefers acidic residues at acidic pH, however, at neutral pH, the enzyme is less selective at these positions. The optimal site cleavage at acidic pH is YNEHS-|-FFMEE and, at neutral pH, MKRHS-|-FRMRG. The protein is Falcilysin of Plasmodium falciparum (isolate 3D7).